The primary structure comprises 305 residues: Glycine--tRNA ligase alpha subunit (305 aa).

It belongs to the class-II aminoacyl-tRNA synthetase family. As to quaternary structure, tetramer of two alpha and two beta subunits.

It is found in the cytoplasm. It carries out the reaction tRNA(Gly) + glycine + ATP = glycyl-tRNA(Gly) + AMP + diphosphate. The sequence is that of Glycine--tRNA ligase alpha subunit from Streptococcus pyogenes serotype M12 (strain MGAS2096).